Here is a 205-residue protein sequence, read N- to C-terminus: Phosphoheptose isomerase (205 aa).

In terms of domain architecture, SIS spans 38-200 (LAVRLALGSK…LFEAVGELEP (163 aa)). Residue 53–55 (NGG) participates in substrate binding. Positions 62 and 66 each coordinate Zn(2+). Residues Glu66, 95–96 (ND), 121–123 (STS), Ser126, and Gln173 each bind substrate. Gln173 and His181 together coordinate Zn(2+).

This sequence belongs to the SIS family. GmhA subfamily. In terms of assembly, homotetramer. Zn(2+) is required as a cofactor.

The protein localises to the cytoplasm. It catalyses the reaction 2 D-sedoheptulose 7-phosphate = D-glycero-alpha-D-manno-heptose 7-phosphate + D-glycero-beta-D-manno-heptose 7-phosphate. It participates in carbohydrate biosynthesis; D-glycero-D-manno-heptose 7-phosphate biosynthesis; D-glycero-alpha-D-manno-heptose 7-phosphate and D-glycero-beta-D-manno-heptose 7-phosphate from sedoheptulose 7-phosphate: step 1/1. Functionally, catalyzes the isomerization of sedoheptulose 7-phosphate in D-glycero-D-manno-heptose 7-phosphate. This is Phosphoheptose isomerase from Maridesulfovibrio salexigens (strain ATCC 14822 / DSM 2638 / NCIMB 8403 / VKM B-1763) (Desulfovibrio salexigens).